The primary structure comprises 526 residues: Opine oxidase subunit A (526 aa).

[2Fe-2S] cluster is bound by residues cysteine 396, cysteine 398, cysteine 431, and cysteine 436.

The protein to T-protein and to dimethylglycine dehydrogenase. Heterodimer of a subunit A and a subunit B. The cofactor is [2Fe-2S] cluster.

The protein operates within opine metabolism; octopine degradation. Oxidative cleavage of octopine into L-arginine and pyruvate. The polypeptide is Opine oxidase subunit A (ooxA) (Rhizobium meliloti (Ensifer meliloti)).